The chain runs to 364 residues: Methylthioribose-1-phosphate isomerase (364 aa).

Substrate-binding positions include 49–51, Arg-89, and Gln-201; that span reads RGA. The active-site Proton donor is Asp-242. 252–253 contacts substrate; it reads NK.

Belongs to the eIF-2B alpha/beta/delta subunits family. MtnA subfamily.

It catalyses the reaction 5-(methylsulfanyl)-alpha-D-ribose 1-phosphate = 5-(methylsulfanyl)-D-ribulose 1-phosphate. Its pathway is amino-acid biosynthesis; L-methionine biosynthesis via salvage pathway; L-methionine from S-methyl-5-thio-alpha-D-ribose 1-phosphate: step 1/6. Functionally, catalyzes the interconversion of methylthioribose-1-phosphate (MTR-1-P) into methylthioribulose-1-phosphate (MTRu-1-P). The chain is Methylthioribose-1-phosphate isomerase from Leptospira interrogans serogroup Icterohaemorrhagiae serovar copenhageni (strain Fiocruz L1-130).